Here is a 946-residue protein sequence, read N- to C-terminus: MKPLSSPLQQYWQTVVERLPEPLAEKSLSTQAKSVLTFSDFVQDSVIAHPEWLTELESQSPQADEWQHYAAWLQEALSNVSDEAGLMRELRLFRRRIMVRIAWAQTLALVTEESILQQLSHLAETLIVAARDWLYDACCREWGTPCNAQGEAQPLLILGMGKLGGGELNFSSDIDLIFAWPEHGCTQGGRRELDNAQFFTRMGQRLIKVLDQPTQDGFVYRVDMRLRPFGESGPLVLSFAALEDYYQEQGRDWERYAMVKARIMGDSEGVYANELRAMLRPFVFRRYIDFSVIQSLRNMKGMIAREVRRRGLTDNIKLGAGGIREIEFIVQVFQLIRGGREPSLQSRSLLPTLSVIAALHLLSENDAEQLRVAYLFLRRLENLLQSINDEQTQTLPSDELNRARLAWAMDFADWPQLTGALTAHMTNVRRVFNELIGDDESETQEESLSEQWRELWQDALQEDDTTPVLAHLSEDDRKQVLTLIADFRKELDKRTIGPRGRQVLDHLMPHLLSDVCAREDAAVTLSRITALLVGIVTRTTYLELLSEFPAALKHLISLCAASPMIASQLARYPLLLDELLDPNTLYQPTATDAYRDELRQYLLRVPEDDEEQQLEALRQFKQAQLLRIAAADIAGTLPVMKVSDHLTWLAEAMIDAVVQQAWVQMVARYGKPNHLNDREGRGFAVVGYGKLGGWELGYSSDLDLIFLHDCPMDAMTDGEREIDGRQFYLRLAQRIMHLFNTRTSSGILYEVDARLRPSGAAGMLVTSAEAFADYQKNEAWTWEHQALVRARVVYGDPQLTAHFDAVRREIMTLPREGKTLQTEVREMREKMRAHLGNKHRNRFDIKADEGGITDIEFITQYLVLRYAHEKPKLTRWSDNVRILELLAQNDIMEEQEAMALTRAYTTLRDELHHLALQELPGHVSEDCFTAERDLVRASWQKWLVEE.

Positions 1 to 440 (MKPLSSPLQQ…VFNELIGDDE (440 aa)) are adenylyl removase. The interval 449-946 (SEQWRELWQD…ASWQKWLVEE (498 aa)) is adenylyl transferase.

Belongs to the GlnE family. Mg(2+) is required as a cofactor.

It carries out the reaction [glutamine synthetase]-O(4)-(5'-adenylyl)-L-tyrosine + phosphate = [glutamine synthetase]-L-tyrosine + ADP. The catalysed reaction is [glutamine synthetase]-L-tyrosine + ATP = [glutamine synthetase]-O(4)-(5'-adenylyl)-L-tyrosine + diphosphate. Its function is as follows. Involved in the regulation of glutamine synthetase GlnA, a key enzyme in the process to assimilate ammonia. When cellular nitrogen levels are high, the C-terminal adenylyl transferase (AT) inactivates GlnA by covalent transfer of an adenylyl group from ATP to specific tyrosine residue of GlnA, thus reducing its activity. Conversely, when nitrogen levels are low, the N-terminal adenylyl removase (AR) activates GlnA by removing the adenylyl group by phosphorolysis, increasing its activity. The regulatory region of GlnE binds the signal transduction protein PII (GlnB) which indicates the nitrogen status of the cell. The protein is Bifunctional glutamine synthetase adenylyltransferase/adenylyl-removing enzyme of Shigella boydii serotype 18 (strain CDC 3083-94 / BS512).